We begin with the raw amino-acid sequence, 616 residues long: Dihydroxy-acid dehydratase (616 aa).

Asp81 lines the Mg(2+) pocket. Cys122 serves as a coordination point for [2Fe-2S] cluster. Positions 123 and 124 each coordinate Mg(2+). The residue at position 124 (Lys124) is an N6-carboxylysine. Cys195 contributes to the [2Fe-2S] cluster binding site. Glu491 provides a ligand contact to Mg(2+). Ser517 serves as the catalytic Proton acceptor.

Belongs to the IlvD/Edd family. Homodimer. It depends on [2Fe-2S] cluster as a cofactor. The cofactor is Mg(2+).

The enzyme catalyses (2R)-2,3-dihydroxy-3-methylbutanoate = 3-methyl-2-oxobutanoate + H2O. It catalyses the reaction (2R,3R)-2,3-dihydroxy-3-methylpentanoate = (S)-3-methyl-2-oxopentanoate + H2O. The protein operates within amino-acid biosynthesis; L-isoleucine biosynthesis; L-isoleucine from 2-oxobutanoate: step 3/4. Its pathway is amino-acid biosynthesis; L-valine biosynthesis; L-valine from pyruvate: step 3/4. Its function is as follows. Functions in the biosynthesis of branched-chain amino acids. Catalyzes the dehydration of (2R,3R)-2,3-dihydroxy-3-methylpentanoate (2,3-dihydroxy-3-methylvalerate) into 2-oxo-3-methylpentanoate (2-oxo-3-methylvalerate) and of (2R)-2,3-dihydroxy-3-methylbutanoate (2,3-dihydroxyisovalerate) into 2-oxo-3-methylbutanoate (2-oxoisovalerate), the penultimate precursor to L-isoleucine and L-valine, respectively. This Salmonella gallinarum (strain 287/91 / NCTC 13346) protein is Dihydroxy-acid dehydratase.